The chain runs to 697 residues: Elongation factor G 2 (697 aa).

One can recognise a tr-type G domain in the interval 5–280; the sequence is SKYRNIGIFA…AVVDYLPAPN (276 aa). Residues 14 to 21, 78 to 82, and 132 to 135 each bind GTP; these read AHVDAGKT, DTPGH, and NKLD.

Belongs to the TRAFAC class translation factor GTPase superfamily. Classic translation factor GTPase family. EF-G/EF-2 subfamily.

The protein localises to the cytoplasm. Its function is as follows. Catalyzes the GTP-dependent ribosomal translocation step during translation elongation. During this step, the ribosome changes from the pre-translocational (PRE) to the post-translocational (POST) state as the newly formed A-site-bound peptidyl-tRNA and P-site-bound deacylated tRNA move to the P and E sites, respectively. Catalyzes the coordinated movement of the two tRNA molecules, the mRNA and conformational changes in the ribosome. This chain is Elongation factor G 2, found in Shewanella sp. (strain MR-4).